Reading from the N-terminus, the 66-residue chain is Probable cytochrome b-c1 complex subunit 9 (66 aa).

The Mitochondrial matrix segment spans residues 1–20 (MSNALTNIFYKYVARRNSTW). Residues 21–46 (MAGAILGAFVLDSTVSGAVNTFFDSV) form a helical membrane-spanning segment. Residues 47-66 (NKGKLWKDVYAERVKKGISQ) are Mitochondrial intermembrane-facing.

The protein belongs to the UQCR10/QCR9 family. In terms of assembly, component of the ubiquinol-cytochrome c oxidoreductase (cytochrome b-c1 complex, complex III, CIII), a multisubunit enzyme composed of 3 respiratory subunits cytochrome b, cytochrome c1 and Rieske protein, 2 core protein subunits, and additional low-molecular weight protein subunits. The complex exists as an obligatory dimer and forms supercomplexes (SCs) in the inner mitochondrial membrane with cytochrome c oxidase (complex IV, CIV).

It is found in the mitochondrion inner membrane. Its function is as follows. Component of the ubiquinol-cytochrome c oxidoreductase, a multisubunit transmembrane complex that is part of the mitochondrial electron transport chain which drives oxidative phosphorylation. The respiratory chain contains 3 multisubunit complexes succinate dehydrogenase (complex II, CII), ubiquinol-cytochrome c oxidoreductase (cytochrome b-c1 complex, complex III, CIII) and cytochrome c oxidase (complex IV, CIV), that cooperate to transfer electrons derived from NADH and succinate to molecular oxygen, creating an electrochemical gradient over the inner membrane that drives transmembrane transport and the ATP synthase. The cytochrome b-c1 complex catalyzes electron transfer from ubiquinol to cytochrome c, linking this redox reaction to translocation of protons across the mitochondrial inner membrane, with protons being carried across the membrane as hydrogens on the quinol. In the process called Q cycle, 2 protons are consumed from the matrix, 4 protons are released into the intermembrane space and 2 electrons are passed to cytochrome c. The polypeptide is Probable cytochrome b-c1 complex subunit 9 (Dictyostelium discoideum (Social amoeba)).